We begin with the raw amino-acid sequence, 228 residues long: UPF0173 metal-dependent hydrolase ABC2731 (228 aa).

This sequence belongs to the UPF0173 family.

This is UPF0173 metal-dependent hydrolase ABC2731 from Shouchella clausii (strain KSM-K16) (Alkalihalobacillus clausii).